The primary structure comprises 211 residues: Large ribosomal subunit protein uL3 (211 aa).

N5-methylglutamine is present on Gln150.

The protein belongs to the universal ribosomal protein uL3 family. As to quaternary structure, part of the 50S ribosomal subunit. Forms a cluster with proteins L14 and L19. Post-translationally, methylated by PrmB.

One of the primary rRNA binding proteins, it binds directly near the 3'-end of the 23S rRNA, where it nucleates assembly of the 50S subunit. The protein is Large ribosomal subunit protein uL3 of Pseudomonas fluorescens (strain SBW25).